Here is a 357-residue protein sequence, read N- to C-terminus: Protein phosphatase 1 regulatory subunit 42 (357 aa).

LRR repeat units lie at residues 29–50 (KITH…SLCK), 51–72 (NLSV…NYAT), 73–94 (NLTH…RSLK), 95–116 (KLEK…EGLG), 117–138 (ELRE…LFDP), 147–168 (SLSI…EILE), and 169–190 (NLNQ…EFLL). The 39-residue stretch at 204–242 (NPVCLKPKYRDRLILVSKSLEFLDGKEIKNIERQFLMNW) folds into the LRRCT domain.

In terms of assembly, interacts with PPP1CC isoform gamma-2; the interaction is direct. Interacts with actin, dynein, KIF5B, KIFC1 and tubulin. Associates with microtubules. Phosphorylated; in the testis.

It is found in the cytoplasm. The protein resides in the cytoskeleton. The protein localises to the microtubule organizing center. It localises to the centrosome. Its function is as follows. Regulates phosphatase activity of protein phosphatase 1 (PP1) complexes in the testis. The protein is Protein phosphatase 1 regulatory subunit 42 (PPP1R42) of Macaca fascicularis (Crab-eating macaque).